The primary structure comprises 176 residues: Ribosome rescue factor SmrB (176 aa).

In terms of domain architecture, Smr spans 93–168 (LDLHGYRQSE…GDAALLVLID (76 aa)).

The protein belongs to the SmrB family. In terms of assembly, associates with collided ribosomes, but not with correctly translating polysomes.

Its function is as follows. Acts as a ribosome collision sensor. Detects stalled/collided disomes (pairs of ribosomes where the leading ribosome is stalled and a second ribosome has collided with it) and endonucleolytically cleaves mRNA at the 5' boundary of the stalled ribosome. Stalled/collided disomes form a new interface (primarily via the 30S subunits) that binds SmrB. Cleaved mRNA becomes available for tmRNA ligation, leading to ribosomal subunit dissociation and rescue of stalled ribosomes. This is Ribosome rescue factor SmrB from Shewanella baltica (strain OS195).